The sequence spans 121 residues: Small ribosomal subunit protein uS13 (121 aa).

Positions 92–121 (RKGLPVRGQRTKTNARTRKGPRKSGVQLKK) are disordered.

The protein belongs to the universal ribosomal protein uS13 family. Part of the 30S ribosomal subunit. Forms a loose heterodimer with protein S19. Forms two bridges to the 50S subunit in the 70S ribosome.

Located at the top of the head of the 30S subunit, it contacts several helices of the 16S rRNA. In the 70S ribosome it contacts the 23S rRNA (bridge B1a) and protein L5 of the 50S subunit (bridge B1b), connecting the 2 subunits; these bridges are implicated in subunit movement. Contacts the tRNAs in the A and P-sites. This chain is Small ribosomal subunit protein uS13, found in Polynucleobacter asymbioticus (strain DSM 18221 / CIP 109841 / QLW-P1DMWA-1) (Polynucleobacter necessarius subsp. asymbioticus).